A 105-amino-acid polypeptide reads, in one-letter code: MQKKPMAPQQPTRVRTPREENNEILGIIEQMLGASRVRVRCMDGHTRMGRIPGKLKRKIWVREGDIVIVVPWEVQSDQKCDIIWRYTKGQVSWLSKKGYLKQAYD.

The S1-like domain occupies 12–87; that stretch reads TRVRTPREEN…QKCDIIWRYT (76 aa).

The protein belongs to the eIF-1A family.

In terms of biological role, seems to be required for maximal rate of protein biosynthesis. Enhances ribosome dissociation into subunits and stabilizes the binding of the initiator Met-tRNA(I) to 40 S ribosomal subunits. The sequence is that of Translation initiation factor 1A (eIF1A) from Methanococcus aeolicus (strain ATCC BAA-1280 / DSM 17508 / OCM 812 / Nankai-3).